Here is a 143-residue protein sequence, read N- to C-terminus: Large ribosomal subunit protein uL13 (143 aa).

This sequence belongs to the universal ribosomal protein uL13 family. In terms of assembly, part of the 50S ribosomal subunit.

This protein is one of the early assembly proteins of the 50S ribosomal subunit, although it is not seen to bind rRNA by itself. It is important during the early stages of 50S assembly. This is Large ribosomal subunit protein uL13 from Albidiferax ferrireducens (strain ATCC BAA-621 / DSM 15236 / T118) (Rhodoferax ferrireducens).